Reading from the N-terminus, the 418-residue chain is Tyrosine--tRNA ligase (418 aa).

Tyrosine 35 serves as a coordination point for L-tyrosine. The 'HIGH' region motif lies at 40–49 (PTAKSLHIGH). The L-tyrosine site is built by tyrosine 168 and glutamine 172. Positions 228–232 (KYGKT) match the 'KMSKS' region motif. Position 231 (lysine 231) interacts with ATP. An S4 RNA-binding domain is found at 352–410 (PTVVGAMVAAGVVDTKSGGRRAVAEGGAYLNNVKVADPDQRLTDDDFLCGRVALVRRGK).

Belongs to the class-I aminoacyl-tRNA synthetase family. TyrS type 1 subfamily. In terms of assembly, homodimer.

Its subcellular location is the cytoplasm. The enzyme catalyses tRNA(Tyr) + L-tyrosine + ATP = L-tyrosyl-tRNA(Tyr) + AMP + diphosphate + H(+). Its function is as follows. Catalyzes the attachment of tyrosine to tRNA(Tyr) in a two-step reaction: tyrosine is first activated by ATP to form Tyr-AMP and then transferred to the acceptor end of tRNA(Tyr). The polypeptide is Tyrosine--tRNA ligase (Cutibacterium acnes (strain DSM 16379 / KPA171202) (Propionibacterium acnes)).